A 524-amino-acid polypeptide reads, in one-letter code: GMP synthase [glutamine-hydrolyzing] (524 aa).

Positions 9-207 constitute a Glutamine amidotransferase type-1 domain; that stretch reads RILILDFGSQ…VIHICQCIPN (199 aa). The active-site Nucleophile is cysteine 86. Catalysis depends on residues histidine 181 and glutamate 183. In terms of domain architecture, GMPS ATP-PPase spans 208 to 399; the sequence is WTTKHIIEDS…LGLPADLIYR (192 aa). Residue 235 to 241 participates in ATP binding; it reads SGGVDSA.

As to quaternary structure, homodimer.

The catalysed reaction is XMP + L-glutamine + ATP + H2O = GMP + L-glutamate + AMP + diphosphate + 2 H(+). The protein operates within purine metabolism; GMP biosynthesis; GMP from XMP (L-Gln route): step 1/1. Catalyzes the synthesis of GMP from XMP. This Coxiella burnetii (strain RSA 493 / Nine Mile phase I) protein is GMP synthase [glutamine-hydrolyzing].